A 206-amino-acid polypeptide reads, in one-letter code: MKKLLCAVLLSPLLYSNAVLADDAKQLRETLTGTESLKADFKQTVTDVNKKVIQSGAGVFALAHPNQFYWHLTAPDESKIVADGKDLWIYNPFAEEVVIMDFTQAITASPIALLVHRDDATWSQYAVTKKQDCYEIKPKATDAGISAVNVCFNKGTLNKFNVLDDKGNLSQFDLSNQHSISTGDKALFKFVLPDNVDVDDQRIKTQ.

An N-terminal signal peptide occupies residues 1–21; sequence MKKLLCAVLLSPLLYSNAVLA.

This sequence belongs to the LolA family. As to quaternary structure, monomer.

It localises to the periplasm. Its function is as follows. Participates in the translocation of lipoproteins from the inner membrane to the outer membrane. Only forms a complex with a lipoprotein if the residue after the N-terminal Cys is not an aspartate (The Asp acts as a targeting signal to indicate that the lipoprotein should stay in the inner membrane). The polypeptide is Outer-membrane lipoprotein carrier protein (Shewanella oneidensis (strain ATCC 700550 / JCM 31522 / CIP 106686 / LMG 19005 / NCIMB 14063 / MR-1)).